A 299-amino-acid chain; its full sequence is 4-diphosphocytidyl-2-C-methyl-D-erythritol kinase (299 aa).

The active site involves Lys-19. 110 to 120 (PVASGIGGGSA) provides a ligand contact to ATP. Asp-152 is an active-site residue.

It belongs to the GHMP kinase family. IspE subfamily.

The catalysed reaction is 4-CDP-2-C-methyl-D-erythritol + ATP = 4-CDP-2-C-methyl-D-erythritol 2-phosphate + ADP + H(+). Its pathway is isoprenoid biosynthesis; isopentenyl diphosphate biosynthesis via DXP pathway; isopentenyl diphosphate from 1-deoxy-D-xylulose 5-phosphate: step 3/6. Functionally, catalyzes the phosphorylation of the position 2 hydroxy group of 4-diphosphocytidyl-2C-methyl-D-erythritol. This chain is 4-diphosphocytidyl-2-C-methyl-D-erythritol kinase, found in Agrobacterium fabrum (strain C58 / ATCC 33970) (Agrobacterium tumefaciens (strain C58)).